Reading from the N-terminus, the 416-residue chain is UDP-N-acetylglucosamine 1-carboxyvinyltransferase (416 aa).

Position 22-23 (Lys22–Asn23) interacts with phosphoenolpyruvate. Arg92 contributes to the UDP-N-acetyl-alpha-D-glucosamine binding site. Cys116 (proton donor) is an active-site residue. Residue Cys116 is modified to 2-(S-cysteinyl)pyruvic acid O-phosphothioketal. UDP-N-acetyl-alpha-D-glucosamine-binding positions include Arg121–Gln125, Asp304, and Ile326.

It belongs to the EPSP synthase family. MurA subfamily.

It is found in the cytoplasm. It carries out the reaction phosphoenolpyruvate + UDP-N-acetyl-alpha-D-glucosamine = UDP-N-acetyl-3-O-(1-carboxyvinyl)-alpha-D-glucosamine + phosphate. The protein operates within cell wall biogenesis; peptidoglycan biosynthesis. Its function is as follows. Cell wall formation. Adds enolpyruvyl to UDP-N-acetylglucosamine. This is UDP-N-acetylglucosamine 1-carboxyvinyltransferase from Aromatoleum aromaticum (strain DSM 19018 / LMG 30748 / EbN1) (Azoarcus sp. (strain EbN1)).